The sequence spans 88 residues: Enticin (88 aa).

The signal sequence occupies residues 1–19; that stretch reads MKTALPLLLLTCLVAAVQS. 3 disulfides stabilise this stretch: cysteine 25–cysteine 33, cysteine 40–cysteine 52, and cysteine 59–cysteine 67. The propeptide occupies 69–88; sequence REQSQLNHDHLNNHTTTQQP.

As to quaternary structure, binds to attractin and temptin.

It localises to the secreted. In terms of biological role, a component of the complex of water-borne protein pheromones that stimulates attraction and mating behavior. This is Enticin from Aplysia californica (California sea hare).